The chain runs to 115 residues: Divalent-cation tolerance protein CutA (115 aa).

The Cu cation site is built by Cys-19, His-86, and His-87.

It belongs to the CutA family. Homotrimer. Cu cation serves as cofactor.

The protein resides in the cytoplasm. In terms of biological role, involved in resistance toward heavy metals. The sequence is that of Divalent-cation tolerance protein CutA from Salmonella agona (strain SL483).